A 456-amino-acid chain; its full sequence is L-seryl-tRNA(Sec) selenium transferase (456 aa).

N6-(pyridoxal phosphate)lysine is present on lysine 288.

Belongs to the SelA family. Pyridoxal 5'-phosphate is required as a cofactor.

The protein localises to the cytoplasm. It carries out the reaction L-seryl-tRNA(Sec) + selenophosphate + H(+) = L-selenocysteinyl-tRNA(Sec) + phosphate. The protein operates within aminoacyl-tRNA biosynthesis; selenocysteinyl-tRNA(Sec) biosynthesis; selenocysteinyl-tRNA(Sec) from L-seryl-tRNA(Sec) (bacterial route): step 1/1. Its function is as follows. Converts seryl-tRNA(Sec) to selenocysteinyl-tRNA(Sec) required for selenoprotein biosynthesis. The sequence is that of L-seryl-tRNA(Sec) selenium transferase from Helicobacter hepaticus (strain ATCC 51449 / 3B1).